The sequence spans 501 residues: Sucrose-6-phosphate hydrolase (501 aa).

Residues 44-47 (LLND), glutamine 63, 106-107 (YT), 167-168 (RD), and glutamate 222 each bind substrate. Aspartate 47 is a catalytic residue.

It belongs to the glycosyl hydrolase 32 family.

The enzyme catalyses Hydrolysis of terminal non-reducing beta-D-fructofuranoside residues in beta-D-fructofuranosides.. It participates in glycan biosynthesis; sucrose metabolism. The sequence is that of Sucrose-6-phosphate hydrolase (scrB) from Pediococcus pentosaceus.